Consider the following 247-residue polypeptide: UPF0309 protein LMOf2365_2617 (247 aa).

The SIS domain occupies 31–214 (VAESIENDGV…ETMVNDNFTP (184 aa)).

The protein belongs to the UPF0309 family.

The protein is UPF0309 protein LMOf2365_2617 of Listeria monocytogenes serotype 4b (strain F2365).